Reading from the N-terminus, the 361-residue chain is MVWLVAMTPRQSSLCGLAAHGLWFLGLVLLMDATARPANHSSTRERAANREENEIMPPDHLNGVKLEMDGHLNKDFHQEVFLGKDMDGFDEDSEPRRSRRKLMVIFSKVDVNTDRRISAKEMQHWIMEKTAEHFQEAVKENKLHFRAVDPDGDGHVSWDEYKVKFLASKGHNEREIAEAIKNHEELKVDEETQEVLGNLRDRWYQADNPPADLLLTEDEFLSFLHPEHSRGMLKFMVKEIFRDLDQDGDKQLSLPEFISLPVGTVENQQGQDIDDNWVKDRKKEFEELIDSNHDGIVTMEELENYMDPMNEYNALNEAKQMIAIADENQNHHLEPEEILKYSEFFTGSKLMDYARNVHEEF.

The signal sequence occupies residues 1–35 (MVWLVAMTPRQSSLCGLAAHGLWFLGLVLLMDATA). Asparagine 39 carries N-linked (GlcNAc...) asparagine glycosylation. EF-hand domains lie at 97-132 (RSRR…KTAE) and 136-171 (EAVK…SKGH). Serine 98 carries the post-translational modification Phosphoserine. Ca(2+) is bound by residues aspartate 110, asparagine 112, aspartate 114, arginine 116, glutamate 121, aspartate 149, aspartate 151, aspartate 153, histidine 155, and glutamate 160. At threonine 192 the chain carries Phosphothreonine. 4 EF-hand domains span residues 196-231 (LGNL…HSRG), 232-267 (MLKF…TVEN), 277-312 (WVKD…MNEY), and 313-348 (NALN…FTGS). Residue aspartate 212 coordinates Ca(2+). Threonine 216 carries the post-translational modification Phosphothreonine. Glutamate 219, aspartate 245, aspartate 247, aspartate 249, glutamine 251, and glutamate 256 together coordinate Ca(2+). Threonine 264 carries the phosphothreonine modification. Ca(2+)-binding residues include aspartate 290, asparagine 292, and aspartate 294. Threonine 298 is modified (phosphothreonine). Positions 301, 326, 328, 330, 332, and 337 each coordinate Ca(2+). Residues 308-361 (PMNEYNALNEAKQMIAIADENQNHHLEPEEILKYSEFFTGSKLMDYARNVHEEF) form a necessary for intracellular retention in Golgi apparatus lumen region.

Belongs to the CREC family. As to expression, ubiquitous.

Its subcellular location is the golgi apparatus lumen. In terms of biological role, may regulate calcium-dependent activities in the endoplasmic reticulum lumen or post-ER compartment. This chain is 45 kDa calcium-binding protein (Sdf4), found in Mus musculus (Mouse).